Reading from the N-terminus, the 434-residue chain is Chaperone SurA (434 aa).

Residues 1 to 22 (MKPSKHLIFALFALAISQPTMA) form the signal peptide. PpiC domains lie at 173-274 (DVEY…KIMD) and 283-383 (IEEV…QLEE).

It localises to the periplasm. It catalyses the reaction [protein]-peptidylproline (omega=180) = [protein]-peptidylproline (omega=0). Chaperone involved in the correct folding and assembly of outer membrane proteins. Recognizes specific patterns of aromatic residues and the orientation of their side chains, which are found more frequently in integral outer membrane proteins. May act in both early periplasmic and late outer membrane-associated steps of protein maturation. The chain is Chaperone SurA from Shewanella oneidensis (strain ATCC 700550 / JCM 31522 / CIP 106686 / LMG 19005 / NCIMB 14063 / MR-1).